We begin with the raw amino-acid sequence, 237 residues long: Phosphoribosylaminoimidazole-succinocarboxamide synthase (237 aa).

The protein belongs to the SAICAR synthetase family.

It carries out the reaction 5-amino-1-(5-phospho-D-ribosyl)imidazole-4-carboxylate + L-aspartate + ATP = (2S)-2-[5-amino-1-(5-phospho-beta-D-ribosyl)imidazole-4-carboxamido]succinate + ADP + phosphate + 2 H(+). Its pathway is purine metabolism; IMP biosynthesis via de novo pathway; 5-amino-1-(5-phospho-D-ribosyl)imidazole-4-carboxamide from 5-amino-1-(5-phospho-D-ribosyl)imidazole-4-carboxylate: step 1/2. In Listeria monocytogenes serotype 4b (strain CLIP80459), this protein is Phosphoribosylaminoimidazole-succinocarboxamide synthase.